The sequence spans 238 residues: Ribonuclease PH (238 aa).

Residues Arg-86 and 124–126 (GTR) each bind phosphate.

The protein belongs to the RNase PH family. In terms of assembly, homohexameric ring arranged as a trimer of dimers.

It catalyses the reaction tRNA(n+1) + phosphate = tRNA(n) + a ribonucleoside 5'-diphosphate. Phosphorolytic 3'-5' exoribonuclease that plays an important role in tRNA 3'-end maturation. Removes nucleotide residues following the 3'-CCA terminus of tRNAs; can also add nucleotides to the ends of RNA molecules by using nucleoside diphosphates as substrates, but this may not be physiologically important. Probably plays a role in initiation of 16S rRNA degradation (leading to ribosome degradation) during starvation. This Mesorhizobium japonicum (strain LMG 29417 / CECT 9101 / MAFF 303099) (Mesorhizobium loti (strain MAFF 303099)) protein is Ribonuclease PH.